The primary structure comprises 505 residues: MTCGSGFGGRAFSCISACGPRPGRCCITAAPYRGISCYRGLTGGFGSHSVCGGFRAGSCGRSFGYRSGGVCGPSPPCITTVSVNESLLTPLNLEIDPNAQCVKQEEKEQIKSLNSRFAAFIDKVRFLEQQNKLLETKLQFYQNRECCQSNLEPLFEGYIETLRREAECVEADSGRLASELNHVQEVLEGYKKKYEEEVSLRATAENEFVALKKDVDCAYLRKSDLEANVEALIQEIDFLRRLYEEEILILQSHISDTSVVVKLDNSRDLNMDCIIAEIKAQYDDIVTRSRAEAESWYRSKCEEMKATVIRHGETLRRTKEEINELNRMIQRLTAEVENAKCQNSKLEAAVAQSEQQGEAALSDARCKLAELEGALQKAKQDMACLIREYQEVMNSKLGLDIEIATYRRLLEGEEQRLCEGIGAVNVCVSSSRGGVVCGDLCVSGSRPVTGSVCSAPCNGNVAVSTGLCAPCGQLNTTCGGGSCGVGSCGISSLGVGSCGSSCRKC.

Positions 1-106 are head; it reads MTCGSGFGGR…PNAQCVKQEE (106 aa). Positions 106–417 constitute an IF rod domain; that stretch reads EKEQIKSLNS…RLLEGEEQRL (312 aa). Residues 107–141 form a coil 1A region; that stretch reads KEQIKSLNSRFAAFIDKVRFLEQQNKLLETKLQFY. Positions 142 to 151 are linker 1; sequence QNRECCQSNL. The interval 152-252 is coil 1B; that stretch reads EPLFEGYIET…YEEEILILQS (101 aa). Lysine 212 participates in a covalent cross-link: Glycyl lysine isopeptide (Lys-Gly) (interchain with G-Cter in SUMO1). Residues 253 to 269 form a linker 12 region; sequence HISDTSVVVKLDNSRDL. A coil 2 region spans residues 270-413; it reads NMDCIIAEIK…ATYRRLLEGE (144 aa). The tail stretch occupies residues 414–505; it reads EQRLCEGIGA…GSCGSSCRKC (92 aa).

This sequence belongs to the intermediate filament family. In terms of assembly, heterotetramer of two type I and two type II keratins. Abundantly expressed in the differentiating cortex of growing (anagen) hair. Expression is restricted to the keratinocytes of the hair cortex and is absent from inner root sheath and medulla. Expressed in malignant lymph node tissue in breast carcinoma tissue.

This chain is Keratin, type II cuticular Hb1 (KRT81), found in Homo sapiens (Human).